The chain runs to 140 residues: Large-conductance mechanosensitive channel (140 aa).

2 helical membrane passes run 11-31 and 82-102; these read FAMR…GAFG and GNFI…FLLV.

This sequence belongs to the MscL family. In terms of assembly, homopentamer.

The protein resides in the cell inner membrane. Functionally, channel that opens in response to stretch forces in the membrane lipid bilayer. May participate in the regulation of osmotic pressure changes within the cell. The protein is Large-conductance mechanosensitive channel of Parabacteroides distasonis (strain ATCC 8503 / DSM 20701 / CIP 104284 / JCM 5825 / NCTC 11152).